The primary structure comprises 101 residues: Phosphoribosyl-AMP cyclohydrolase (101 aa).

D71 serves as a coordination point for Mg(2+). Position 72 (C72) interacts with Zn(2+). Residues D73 and D75 each contribute to the Mg(2+) site. The Zn(2+) site is built by C88 and C95.

The protein belongs to the PRA-CH family. In terms of assembly, homodimer. Requires Mg(2+) as cofactor. Zn(2+) serves as cofactor.

It localises to the cytoplasm. The catalysed reaction is 1-(5-phospho-beta-D-ribosyl)-5'-AMP + H2O = 1-(5-phospho-beta-D-ribosyl)-5-[(5-phospho-beta-D-ribosylamino)methylideneamino]imidazole-4-carboxamide. It functions in the pathway amino-acid biosynthesis; L-histidine biosynthesis; L-histidine from 5-phospho-alpha-D-ribose 1-diphosphate: step 3/9. Functionally, catalyzes the hydrolysis of the adenine ring of phosphoribosyl-AMP. This Bacillus cereus (strain AH187) protein is Phosphoribosyl-AMP cyclohydrolase.